The chain runs to 516 residues: 2-isopropylmalate synthase (516 aa).

The Pyruvate carboxyltransferase domain maps to Val-5 to Tyr-267. Asp-14, His-202, His-204, and Asn-238 together coordinate Mn(2+). The regulatory domain stretch occupies residues Tyr-392–Tyr-516.

Belongs to the alpha-IPM synthase/homocitrate synthase family. LeuA type 1 subfamily. As to quaternary structure, homodimer. Requires Mn(2+) as cofactor.

It localises to the cytoplasm. The enzyme catalyses 3-methyl-2-oxobutanoate + acetyl-CoA + H2O = (2S)-2-isopropylmalate + CoA + H(+). The protein operates within amino-acid biosynthesis; L-leucine biosynthesis; L-leucine from 3-methyl-2-oxobutanoate: step 1/4. Catalyzes the condensation of the acetyl group of acetyl-CoA with 3-methyl-2-oxobutanoate (2-ketoisovalerate) to form 3-carboxy-3-hydroxy-4-methylpentanoate (2-isopropylmalate). This chain is 2-isopropylmalate synthase, found in Buchnera aphidicola subsp. Diuraphis noxia.